The primary structure comprises 350 residues: Histidinol-phosphate aminotransferase (350 aa).

Lysine 209 bears the N6-(pyridoxal phosphate)lysine mark.

This sequence belongs to the class-II pyridoxal-phosphate-dependent aminotransferase family. Histidinol-phosphate aminotransferase subfamily. As to quaternary structure, homodimer. It depends on pyridoxal 5'-phosphate as a cofactor.

The catalysed reaction is L-histidinol phosphate + 2-oxoglutarate = 3-(imidazol-4-yl)-2-oxopropyl phosphate + L-glutamate. It participates in amino-acid biosynthesis; L-histidine biosynthesis; L-histidine from 5-phospho-alpha-D-ribose 1-diphosphate: step 7/9. The sequence is that of Histidinol-phosphate aminotransferase from Christiangramia forsetii (strain DSM 17595 / CGMCC 1.15422 / KT0803) (Gramella forsetii).